We begin with the raw amino-acid sequence, 145 residues long: METLLSFDEIKKIIPHRYPFLLIDRITELEEGKRCTGIKQVSGNEPFFQGHFPEYAVMPGVLIVEALAQVGAVAMLKLEENQGKLAMFTGIDKCRFKSQVTPGDTLTLSVEMTRVKGPIGKGTATAKVGDKLACSCEISFAIIEK.

His-51 is an active-site residue.

Belongs to the thioester dehydratase family. FabZ subfamily.

It is found in the cytoplasm. It catalyses the reaction a (3R)-hydroxyacyl-[ACP] = a (2E)-enoyl-[ACP] + H2O. Its function is as follows. Involved in unsaturated fatty acids biosynthesis. Catalyzes the dehydration of short chain beta-hydroxyacyl-ACPs and long chain saturated and unsaturated beta-hydroxyacyl-ACPs. The sequence is that of 3-hydroxyacyl-[acyl-carrier-protein] dehydratase FabZ from Macrococcus caseolyticus (strain JCSC5402) (Macrococcoides caseolyticum).